Reading from the N-terminus, the 362-residue chain is RING-H2 finger protein ATL52 (362 aa).

A helical membrane pass occupies residues 58–78 (LIALIGILTSALILVSYYTLI). Residues 142–184 (CSVCLSEFEENESLRLLPKCNHAFHLPCIDTWLKSHSNCPLCR) form an RING-type; atypical zinc finger. Disordered stretches follow at residues 252–271 (DARSELQLPEERRETKDEDS) and 296–333 (EDEEGESGGVGTSQRREEGEDGDGKTIPPTEANQRSGG). Positions 309-319 (QRREEGEDGDG) are enriched in basic and acidic residues.

Belongs to the RING-type zinc finger family. ATL subfamily. As to expression, expressed in flowers.

It is found in the membrane. It carries out the reaction S-ubiquitinyl-[E2 ubiquitin-conjugating enzyme]-L-cysteine + [acceptor protein]-L-lysine = [E2 ubiquitin-conjugating enzyme]-L-cysteine + N(6)-ubiquitinyl-[acceptor protein]-L-lysine.. The protein operates within protein modification; protein ubiquitination. The protein is RING-H2 finger protein ATL52 (ATL52) of Arabidopsis thaliana (Mouse-ear cress).